A 358-amino-acid chain; its full sequence is Putative zinc metalloprotease BH06270 (358 aa).

H7 serves as a coordination point for Zn(2+). Residue E8 is part of the active site. A Zn(2+)-binding site is contributed by H11. The next 3 membrane-spanning stretches (helical) occupy residues 89 to 111 (ATVF…FFFF), 282 to 304 (FLSL…LFPI), and 332 to 354 (IIFR…NDYF). Residues 102–177 (TVVILTFFFF…IEFKMERSGQ (76 aa)) enclose the PDZ domain.

This sequence belongs to the peptidase M50B family. Requires Zn(2+) as cofactor.

Its subcellular location is the cell inner membrane. In Bartonella henselae (strain ATCC 49882 / DSM 28221 / CCUG 30454 / Houston 1) (Rochalimaea henselae), this protein is Putative zinc metalloprotease BH06270.